A 652-amino-acid chain; its full sequence is Acetolactate synthase 3, chloroplastic (652 aa).

The span at 1–20 shows a compositional bias: polar residues; it reads MAAATSSSPISLTAKPSSKS. The tract at residues 1–23 is disordered; that stretch reads MAAATSSSPISLTAKPSSKSPLP. The transit peptide at 1-69 directs the protein to the chloroplast; it reads MAAATSSSPI…PEKTDKIKTF (69 aa). E126 contributes to the thiamine diphosphate binding site. FAD-binding positions include R228, 334-355, and 377-396; these read HGTV…FGVR and DIDS…VCGD. The interval 469 to 549 is thiamine pyrophosphate binding; it reads QHQMWAAQFY…VKILLLNNQH (81 aa). Mg(2+) is bound by residues D520 and N547.

This sequence belongs to the TPP enzyme family. Mg(2+) serves as cofactor. The cofactor is thiamine diphosphate.

The protein localises to the plastid. The protein resides in the chloroplast. It carries out the reaction 2 pyruvate + H(+) = (2S)-2-acetolactate + CO2. Its pathway is amino-acid biosynthesis; L-isoleucine biosynthesis; L-isoleucine from 2-oxobutanoate: step 1/4. It participates in amino-acid biosynthesis; L-valine biosynthesis; L-valine from pyruvate: step 1/4. The chain is Acetolactate synthase 3, chloroplastic from Brassica napus (Rape).